We begin with the raw amino-acid sequence, 445 residues long: Serine--tRNA ligase (445 aa).

Residue Thr229–Glu231 coordinates L-serine. ATP contacts are provided by residues Arg260 to Glu262 and Val276. Glu283 serves as a coordination point for L-serine. Residue Glu347–Ser350 coordinates ATP. Ser383 provides a ligand contact to L-serine.

The protein belongs to the class-II aminoacyl-tRNA synthetase family. Type-1 seryl-tRNA synthetase subfamily. As to quaternary structure, homodimer. The tRNA molecule binds across the dimer.

The protein localises to the cytoplasm. It catalyses the reaction tRNA(Ser) + L-serine + ATP = L-seryl-tRNA(Ser) + AMP + diphosphate + H(+). It carries out the reaction tRNA(Sec) + L-serine + ATP = L-seryl-tRNA(Sec) + AMP + diphosphate + H(+). Its pathway is aminoacyl-tRNA biosynthesis; selenocysteinyl-tRNA(Sec) biosynthesis; L-seryl-tRNA(Sec) from L-serine and tRNA(Sec): step 1/1. Catalyzes the attachment of serine to tRNA(Ser). Is also able to aminoacylate tRNA(Sec) with serine, to form the misacylated tRNA L-seryl-tRNA(Sec), which will be further converted into selenocysteinyl-tRNA(Sec). This chain is Serine--tRNA ligase, found in Thermomicrobium roseum (strain ATCC 27502 / DSM 5159 / P-2).